A 427-amino-acid chain; its full sequence is Enolase (427 aa).

Q163 is a binding site for (2R)-2-phosphoglycerate. Catalysis depends on E205, which acts as the Proton donor. 3 residues coordinate Mg(2+): D242, E285, and D312. Positions 337, 366, 367, and 388 each coordinate (2R)-2-phosphoglycerate. The Proton acceptor role is filled by K337.

It belongs to the enolase family. It depends on Mg(2+) as a cofactor.

It localises to the cytoplasm. Its subcellular location is the secreted. The protein localises to the cell surface. The catalysed reaction is (2R)-2-phosphoglycerate = phosphoenolpyruvate + H2O. It participates in carbohydrate degradation; glycolysis; pyruvate from D-glyceraldehyde 3-phosphate: step 4/5. Functionally, catalyzes the reversible conversion of 2-phosphoglycerate (2-PG) into phosphoenolpyruvate (PEP). It is essential for the degradation of carbohydrates via glycolysis. In Variovorax paradoxus (strain S110), this protein is Enolase.